The following is a 135-amino-acid chain: Early E3 15.3 kDa protein (135 aa).

It belongs to the adenoviridae E3_15 family.

In terms of biological role, protects virus-infected cells from TNF-induced cytolysis. In Human adenovirus B serotype 7 (HAdV-7), this protein is Early E3 15.3 kDa protein.